We begin with the raw amino-acid sequence, 54 residues long: Ribulose bisphosphate carboxylase large chain (54 aa).

Residues 1 to 2 constitute a propeptide that is removed on maturation; it reads MS. The residue at position 3 (proline 3) is an N-acetylproline. An N6,N6,N6-trimethyllysine modification is found at lysine 14.

The protein belongs to the RuBisCO large chain family. Type I subfamily. As to quaternary structure, heterohexadecamer of 8 large chains and 8 small chains.

It localises to the plastid. Its subcellular location is the chloroplast. The catalysed reaction is 2 (2R)-3-phosphoglycerate + 2 H(+) = D-ribulose 1,5-bisphosphate + CO2 + H2O. It catalyses the reaction D-ribulose 1,5-bisphosphate + O2 = 2-phosphoglycolate + (2R)-3-phosphoglycerate + 2 H(+). Its function is as follows. RuBisCO catalyzes two reactions: the carboxylation of D-ribulose 1,5-bisphosphate, the primary event in carbon dioxide fixation, as well as the oxidative fragmentation of the pentose substrate in the photorespiration process. Both reactions occur simultaneously and in competition at the same active site. The chain is Ribulose bisphosphate carboxylase large chain (rbcL) from Magnolia liliiflora (Mulan magnolia).